The primary structure comprises 318 residues: Biotin synthase (318 aa).

The 230-residue stretch at 44–273 folds into the Radical SAM core domain; that stretch reads LCGKKFNLCT…EKQIRLAGGR (230 aa). [4Fe-4S] cluster contacts are provided by cysteine 62, cysteine 66, and cysteine 69. The [2Fe-2S] cluster site is built by serine 106, cysteine 138, cysteine 198, and arginine 268.

Belongs to the radical SAM superfamily. Biotin synthase family. Homodimer. Requires [4Fe-4S] cluster as cofactor. [2Fe-2S] cluster serves as cofactor.

The catalysed reaction is (4R,5S)-dethiobiotin + (sulfur carrier)-SH + 2 reduced [2Fe-2S]-[ferredoxin] + 2 S-adenosyl-L-methionine = (sulfur carrier)-H + biotin + 2 5'-deoxyadenosine + 2 L-methionine + 2 oxidized [2Fe-2S]-[ferredoxin]. The protein operates within cofactor biosynthesis; biotin biosynthesis; biotin from 7,8-diaminononanoate: step 2/2. Catalyzes the conversion of dethiobiotin (DTB) to biotin by the insertion of a sulfur atom into dethiobiotin via a radical-based mechanism. The sequence is that of Biotin synthase from Clostridium botulinum (strain Alaska E43 / Type E3).